The primary structure comprises 115 residues: Salivary protein gSG6 (115 aa).

The N-terminal stretch at 1–28 (MAIRVELLLAMVLLPLLLLESVVPHAAA) is a signal peptide.

Female saliva (at protein level). Distal-lateral lobes of female salivary gland (at protein level). Not detected in male salivary gland (at protein level).

The protein resides in the secreted. Required for efficient probing and blood feeding. This is Salivary protein gSG6 from Anopheles gambiae (African malaria mosquito).